Reading from the N-terminus, the 601-residue chain is Glutathione-regulated potassium-efflux system protein KefB (601 aa).

The next 13 helical transmembrane spans lie at Asp5–Ala25, Ile29–Phe49, Glu55–Leu75, Ile87–Met107, Ala115–Met135, Val152–Gly172, Leu181–Leu201, Phe207–Gly227, Leu230–Leu250, Gly268–Tyr288, Ile291–Gly311, Leu324–Ala344, and Ala356–Ile376. Positions Lys400 to Thr519 constitute an RCK N-terminal domain.

It belongs to the monovalent cation:proton antiporter 2 (CPA2) transporter (TC 2.A.37) family. KefB subfamily. Interacts with the regulatory subunit KefG.

Its subcellular location is the cell inner membrane. In terms of biological role, pore-forming subunit of a potassium efflux system that confers protection against electrophiles. Catalyzes K(+)/H(+) antiport. In Cronobacter sakazakii (strain ATCC BAA-894) (Enterobacter sakazakii), this protein is Glutathione-regulated potassium-efflux system protein KefB.